Consider the following 171-residue polypeptide: Nicotinamide-nucleotide adenylyltransferase (171 aa).

Belongs to the archaeal NMN adenylyltransferase family.

Its subcellular location is the cytoplasm. It carries out the reaction beta-nicotinamide D-ribonucleotide + ATP + H(+) = diphosphate + NAD(+). The protein operates within cofactor biosynthesis; NAD(+) biosynthesis; NAD(+) from nicotinamide D-ribonucleotide: step 1/1. This chain is Nicotinamide-nucleotide adenylyltransferase, found in Ignicoccus hospitalis (strain KIN4/I / DSM 18386 / JCM 14125).